The following is a 497-amino-acid chain: Probable malate:quinone oxidoreductase (497 aa).

This sequence belongs to the MQO family. FAD serves as cofactor.

It carries out the reaction (S)-malate + a quinone = a quinol + oxaloacetate. The protein operates within carbohydrate metabolism; tricarboxylic acid cycle; oxaloacetate from (S)-malate (quinone route): step 1/1. This is Probable malate:quinone oxidoreductase from Tolumonas auensis (strain DSM 9187 / NBRC 110442 / TA 4).